The primary structure comprises 179 residues: ATP synthase subunit b, chloroplastic (179 aa).

Residues I28 to L46 form a helical membrane-spanning segment.

The protein belongs to the ATPase B chain family. F-type ATPases have 2 components, F(1) - the catalytic core - and F(0) - the membrane proton channel. F(1) has five subunits: alpha(3), beta(3), gamma(1), delta(1), epsilon(1). F(0) has four main subunits: a(1), b(1), b'(1) and c(10-14). The alpha and beta chains form an alternating ring which encloses part of the gamma chain. F(1) is attached to F(0) by a central stalk formed by the gamma and epsilon chains, while a peripheral stalk is formed by the delta, b and b' chains.

The protein localises to the plastid. It localises to the chloroplast thylakoid membrane. In terms of biological role, f(1)F(0) ATP synthase produces ATP from ADP in the presence of a proton or sodium gradient. F-type ATPases consist of two structural domains, F(1) containing the extramembraneous catalytic core and F(0) containing the membrane proton channel, linked together by a central stalk and a peripheral stalk. During catalysis, ATP synthesis in the catalytic domain of F(1) is coupled via a rotary mechanism of the central stalk subunits to proton translocation. Component of the F(0) channel, it forms part of the peripheral stalk, linking F(1) to F(0). In Trieres chinensis (Marine centric diatom), this protein is ATP synthase subunit b, chloroplastic.